We begin with the raw amino-acid sequence, 194 residues long: Kallikrein-like enzyme LV-Ka (194 aa).

5 disulfides stabilise this stretch: cysteine 7–cysteine 99, cysteine 44–cysteine 192, cysteine 78–cysteine 146, cysteine 110–cysteine 125, and cysteine 136–cysteine 161. The Peptidase S1 domain maps to 36 to 185 (LNQEDKFICP…YTEWIQSIIA (150 aa)). Residue serine 140 is the Charge relay system of the active site.

Belongs to the peptidase S1 family. Snake venom subfamily. In terms of assembly, monomer. Post-translationally, N-glycosylated. Expressed by the venom gland.

The protein localises to the secreted. With respect to regulation, completely inhibited by the serine protease inhibitors NPGB and PMSF, partially inhibited by benzamidines, and weakly or not inhibited by SBTI and EDTA. In terms of biological role, shows kallikrein-like activity, releasing bradykinin from kininogen. Also activates plasminogen, which is also a plasma kallikrein activity. Is active upon the kallikrein substrates S-2266 and S-2302, suggesting a preference for Arg in P1 position. In vivo, lowers blood pressure after intravenous injection in rat. The protein is Kallikrein-like enzyme LV-Ka of Lachesis muta muta (Bushmaster).